Consider the following 252-residue polypeptide: Ribosomal RNA small subunit methyltransferase J (252 aa).

S-adenosyl-L-methionine contacts are provided by residues 126–127 (ER) and aspartate 176.

This sequence belongs to the methyltransferase superfamily. RsmJ family.

The protein localises to the cytoplasm. The enzyme catalyses guanosine(1516) in 16S rRNA + S-adenosyl-L-methionine = N(2)-methylguanosine(1516) in 16S rRNA + S-adenosyl-L-homocysteine + H(+). Its function is as follows. Specifically methylates the guanosine in position 1516 of 16S rRNA. In Bdellovibrio bacteriovorus (strain ATCC 15356 / DSM 50701 / NCIMB 9529 / HD100), this protein is Ribosomal RNA small subunit methyltransferase J.